The following is a 206-amino-acid chain: Large ribosomal subunit protein uL4 (206 aa).

The tract at residues 48–75 is disordered; the sequence is TQSAKTRAEVSGGGIKPWRQKGTGRARQ.

This sequence belongs to the universal ribosomal protein uL4 family. As to quaternary structure, part of the 50S ribosomal subunit.

Its function is as follows. One of the primary rRNA binding proteins, this protein initially binds near the 5'-end of the 23S rRNA. It is important during the early stages of 50S assembly. It makes multiple contacts with different domains of the 23S rRNA in the assembled 50S subunit and ribosome. In terms of biological role, forms part of the polypeptide exit tunnel. The chain is Large ribosomal subunit protein uL4 from Clostridium botulinum (strain Loch Maree / Type A3).